Reading from the N-terminus, the 140-residue chain is MPSQRSPTKRSPTKRSPQKGAGKGGKGSKRGGKARRRGGAAVRRRRRRRESYGIYIYKVLKQVHPDTGISSRGMSIMNSFVNDVFERVAAEASRLTKYNRRSTVSSREIQTAVRLLLPGELAKHAVSEGTKAVTKYTTSR.

Residues 1–47 are disordered; that stretch reads MPSQRSPTKRSPTKRSPQKGAGKGGKGSKRGGKARRRGGAAVRRRRR. 3 consecutive short sequence motifs (SPKK motif) follow at residues 6–9, 11–14, and 16–19; these read SPTK and SPQK. Composition is skewed to basic residues over residues 7–17 and 26–47; these read PTKRSPTKRSP and KGSK…RRRR. 2 positions are modified to phosphoserine: S11 and S16. O-linked (GlcNAc) serine glycosylation occurs at S127. A Glycyl lysine isopeptide (Lys-Gly) (interchain with G-Cter in ubiquitin) cross-link involves residue K135.

The protein belongs to the histone H2B family. As to quaternary structure, the nucleosome is a histone octamer containing two molecules each of H2A, H2B, H3 and H4 assembled in one H3-H4 heterotetramer and two H2A-H2B heterodimers. The octamer wraps approximately 147 bp of DNA. Post-translationally, monoubiquitination of Lys-135 gives a specific tag for epigenetic transcriptional activation and is also prerequisite for histone H3 'Lys-4' and 'Lys-79' methylation. In terms of processing, phosphorylated on SPKK motifs 2 and 3; which may regulate DNA binding. Dephosphorylated during maturation of spermatids to mature sperm and rephosphorylated at fertilization. GlcNAcylation at Ser-127 promotes monoubiquitination of Lys-135. It fluctuates in response to extracellular glucose, and associates with transcribed genes.

The protein localises to the nucleus. Its subcellular location is the chromosome. Core component of nucleosome. Nucleosomes wrap and compact DNA into chromatin, limiting DNA accessibility to the cellular machineries which require DNA as a template. Histones thereby play a central role in transcription regulation, DNA repair, DNA replication and chromosomal stability. DNA accessibility is regulated via a complex set of post-translational modifications of histones, also called histone code, and nucleosome remodeling. This Strongylocentrotus purpuratus (Purple sea urchin) protein is Histone H2B.1, sperm.